The following is a 418-amino-acid chain: GTPase Obg (418 aa).

An Obg domain is found at 1–156; sequence MKFIDEITLN…KKLTLVLKVL (156 aa). Residues 157–324 enclose the OBG-type G domain; that stretch reads ADVGFVGKPS…LKEALWQSVK (168 aa). Residues 163-170, 188-192, 209-212, 278-281, and 305-307 each bind GTP; these read GKPSAGKS, FTTLV, DLPG, NKKD, and SAL. Residues Ser170 and Thr190 each coordinate Mg(2+). Residues 339–417 enclose the OCT domain; the sequence is VFINFEADFN…IYDYEFVWGN (79 aa).

Belongs to the TRAFAC class OBG-HflX-like GTPase superfamily. OBG GTPase family. In terms of assembly, monomer. Requires Mg(2+) as cofactor.

The protein resides in the cytoplasm. An essential GTPase which binds GTP, GDP and possibly (p)ppGpp with moderate affinity, with high nucleotide exchange rates and a fairly low GTP hydrolysis rate. Plays a role in control of the cell cycle, stress response, ribosome biogenesis and in those bacteria that undergo differentiation, in morphogenesis control. This chain is GTPase Obg, found in Mycoplasmopsis pulmonis (strain UAB CTIP) (Mycoplasma pulmonis).